The chain runs to 141 residues: Hemoglobin subunit alpha (141 aa).

One can recognise a Globin domain in the interval 1 to 141 (VLSPADKTNV…VSTVLTSKYR (141 aa)). At serine 3 the chain carries Phosphoserine. Lysine 7 carries the post-translational modification N6-succinyllysine. Threonine 8 carries the phosphothreonine modification. Lysine 11 carries the N6-succinyllysine modification. Residue lysine 16 is modified to N6-acetyllysine; alternate. Residue lysine 16 is modified to N6-succinyllysine; alternate. Tyrosine 24 is modified (phosphotyrosine). The residue at position 35 (serine 35) is a Phosphoserine. Lysine 40 is modified (N6-succinyllysine). Serine 49 bears the Phosphoserine mark. An O2-binding site is contributed by histidine 58. A heme b-binding site is contributed by histidine 87. Serine 102 carries the phosphoserine modification. Threonine 108 is modified (phosphothreonine). At serine 124 the chain carries Phosphoserine. Phosphothreonine is present on residues threonine 134 and threonine 137. Serine 138 is modified (phosphoserine).

It belongs to the globin family. As to quaternary structure, heterotetramer of two alpha chains and two beta chains. In terms of tissue distribution, red blood cells.

Its function is as follows. Involved in oxygen transport from the lung to the various peripheral tissues. Functionally, hemopressin acts as an antagonist peptide of the cannabinoid receptor CNR1. Hemopressin-binding efficiently blocks cannabinoid receptor CNR1 and subsequent signaling. The sequence is that of Hemoglobin subunit alpha (HBA) from Pteronura brasiliensis (Giant otter).